A 700-amino-acid chain; its full sequence is Choline transporter-like protein 5-B (700 aa).

Topologically, residues 1 to 4 are cytoplasmic; sequence GCTD. A helical membrane pass occupies residues 5-25; that stretch reads VLCCVIFVIVILGYIVLGTVA. Topologically, residues 26–209 are extracellular; that stretch reads WMHGDPRKVV…KIFEDYASSW (184 aa). Asn-157 and Asn-164 each carry an N-linked (GlcNAc...) asparagine glycan. Residues 210–230 form a helical membrane-spanning segment; that stretch reads FWILIGLVISMLVSLVFILLL. Over 231-233 the chain is Cytoplasmic; that stretch reads RFT. Residues 234-254 traverse the membrane as a helical segment; it reads AGVLFWLVIFGVIAAVGYGIW. The Extracellular segment spans residues 255–292; it reads HCYWEYSSLKGKPDSDVTISDIGFQTDFRVYLQLSQTW. A helical membrane pass occupies residues 293-313; the sequence is LIFMTSLAVIEAIIILVLIFL. At 314–341 the chain is on the cytoplasmic side; it reads RNRVRIAIALLKEGSKAIGCIMSTLFYP. Residues 342–362 form a helical membrane-spanning segment; the sequence is IITFLLLALCIAYWAVTAVFL. At 363–432 the chain is on the extracellular side; sequence ASSGEAVYKV…LQLCNLLVFL (70 aa). 2 N-linked (GlcNAc...) asparagine glycosylation sites follow: Asn-383 and Asn-395. Residues 433-455 traverse the membrane as a helical segment; that stretch reads WLVNFTIALGQCTLAGAFAAYYW. Over 456 to 482 the chain is Cytoplasmic; sequence ALRKPADIPPCPLASSFGRALRYHTGS. Residues 483 to 503 form a helical membrane-spanning segment; sequence LAFGALILSIVQFIRIILEYL. At 504-541 the chain is on the extracellular side; it reads DHKLKGAHNAFTRFLLCCLKCCFWCLEHFIKFMNRNAY. Residues 542–562 traverse the membrane as a helical segment; that stretch reads IMISIYGKNFCTSARDAFFLL. Residues 563–577 are Cytoplasmic-facing; sequence MRNVMRVAVLDKVTD. A helical transmembrane segment spans residues 578–598; that stretch reads FLLFLGKLLISGSVGVLAFFF. Residues 599–616 are Extracellular-facing; the sequence is FTRQIPVIQEEVPSLNYY. The helical transmembrane segment at 617–637 threads the bilayer; it reads WVPLLTVIFGSYMIAHGFFNV. At 638 to 687 the chain is on the cytoplasmic side; that stretch reads YAMCVDTLFLCFLLDLEKNDGSATRPYYMCSSLRAILNKKNQKRPKETKR. The tract at residues 676 to 700 is disordered; the sequence is KKNQKRPKETKRGRKQKKEQPKSRH. A compositionally biased stretch (basic residues) spans 677–692; the sequence is KNQKRPKETKRGRKQK.

The protein belongs to the CTL (choline transporter-like) family.

It localises to the cell membrane. It catalyses the reaction choline(out) + n H(+)(in) = choline(in) + n H(+)(out). In terms of biological role, choline/H+ antiporter. In Danio rerio (Zebrafish), this protein is Choline transporter-like protein 5-B (slc44a5b).